Consider the following 411-residue polypeptide: Z-DNA-binding protein 1 (411 aa).

Z-binding domains lie at 8 to 70 and 84 to 148; these read LSTG…SIGG and SSAQ…HSRQ. Residues Lys17 and Lys43 each participate in a glycyl lysine isopeptide (Lys-Gly) (interchain with G-Cter in ubiquitin) cross-link. A disordered region spans residues 60–86; that stretch reads SPEPATWSIGGAASGDGAPAIPENSSA. 2 consecutive short sequence motifs (RIP homotypic interaction motif (RHIM)) follow at residues 188 to 205 and 237 to 261; these read NSNA…REKA and YIYM…LVGD. 2 disordered regions span residues 263-303 and 332-411; these read GKHP…EGDT and KGEV…LSKQ. Polar residues-rich tracts occupy residues 268-292, 350-371, and 400-411; these read YSFS…NMQT, GTSS…SMLP, and IESSQDTGLSKQ.

Homodimer. Interacts (via RIP homotypic interaction motif) with RIPK3; leading to RIPK3 activation and necroptosis; interaction is enhanced by CASP6. Interacts (via RIP homotypic interaction motif) with RIPK1. Component of the AIM2 PANoptosome complex, a multiprotein complex that drives inflammatory cell death (PANoptosis). In terms of assembly, (Microbial infection) Interacts (via RIP homotypic interaction motif) with murid herpesvirus protein RIR1 (via RIP homotypic interaction motif); leading to inhibition of ZBP1-dependent necroptosis. As to quaternary structure, (Microbial infection) Interacts with vaccinia virus E3 protein; leading to inhibit ZBP1-dependent necroptosis. In terms of processing, ubiquitinated; polyubiquitinated following influenza A virus (IAV) infection. Post-translationally, phosphorylated. Expressed in lung, spleen and liver. Lower levels were seen in heart, kidney and testis. Expression is greatly up-regulated in tumor stromal cells and activated macrophages.

Its subcellular location is the cytoplasm. The protein resides in the nucleus. ZBP1-dependent necroptosis is normally inhibited by RIPK1: RIPK1 inhibits the ZBP1-induced activation of RIPK3 via FADD-mediated recruitment of CASP8, which cleaves RIPK1 and limits TNF-induced necroptosis. Functionally, key innate sensor that recognizes and binds Z-RNA structures, which are produced by a number of viruses, such as herpesvirus, orthomyxovirus or flavivirus, and triggers different forms of cell death. ZBP1 acts as an essential mediator of pyroptosis, necroptosis and apoptosis (PANoptosis), an integral part of host defense against pathogens, by activating RIPK3, caspase-8 (CASP8), and the NLRP3 inflammasome. Key activator of necroptosis, a programmed cell death process in response to death-inducing TNF-alpha family members, via its ability to bind Z-RNA: once activated upon Z-RNA-binding, ZBP1 interacts and stimulates RIPK3 kinase, which phosphorylates and activates MLKL, triggering execution of programmed necrosis. In addition to TNF-induced necroptosis, necroptosis can also take place in the nucleus in response to orthomyxoviruses infection: ZBP1 recognizes and binds Z-RNA structures that are produced in infected nuclei by orthomyxoviruses, such as the influenza A virus (IAV), leading to ZBP1 activation, RIPK3 stimulation and subsequent MLKL phosphorylation, triggering disruption of the nuclear envelope and leakage of cellular DNA into the cytosol. ZBP1-dependent cell death in response to IAV infection promotes interleukin-1 alpha (IL1A) induction in an NLRP3-inflammasome-independent manner: IL1A expression is required for the optimal interleukin-1 beta (IL1B) production, and together, these cytokines promote infiltration of inflammatory neutrophils to the lung, leading to the formation of neutrophil extracellular traps. In addition to its direct role in driving necroptosis via its ability to sense Z-RNAs, also involved in PANoptosis triggered in response to bacterial infection: component of the AIM2 PANoptosome complex, a multiprotein complex that triggers PANoptosis. Also acts as the apical sensor of fungal infection responsible for activating PANoptosis. Involved in CASP8-mediated cell death via its interaction with RIPK1 but independently of its ability to sense Z-RNAs. In some cell types, also able to restrict viral replication by promoting cell death-independent responses. In response to flavivirus infection in neurons, promotes a cell death-independent pathway that restricts viral replication: together with RIPK3, promotes a death-independent transcriptional program that modifies the cellular metabolism via up-regulation expression of the enzyme ACOD1/IRG1 and production of the metabolite itaconate. Itaconate inhibits the activity of succinate dehydrogenase, generating a metabolic state in neurons that suppresses replication of viral genomes. The polypeptide is Z-DNA-binding protein 1 (Mus musculus (Mouse)).